A 392-amino-acid polypeptide reads, in one-letter code: NAD(P)H-quinone oxidoreductase subunit H (392 aa).

This sequence belongs to the complex I 49 kDa subunit family. In terms of assembly, NDH-1 can be composed of about 15 different subunits; different subcomplexes with different compositions have been identified which probably have different functions.

Its subcellular location is the cellular thylakoid membrane. The enzyme catalyses a plastoquinone + NADH + (n+1) H(+)(in) = a plastoquinol + NAD(+) + n H(+)(out). The catalysed reaction is a plastoquinone + NADPH + (n+1) H(+)(in) = a plastoquinol + NADP(+) + n H(+)(out). Functionally, NDH-1 shuttles electrons from an unknown electron donor, via FMN and iron-sulfur (Fe-S) centers, to quinones in the respiratory and/or the photosynthetic chain. The immediate electron acceptor for the enzyme in this species is believed to be plastoquinone. Couples the redox reaction to proton translocation, and thus conserves the redox energy in a proton gradient. Cyanobacterial NDH-1 also plays a role in inorganic carbon-concentration. The polypeptide is NAD(P)H-quinone oxidoreductase subunit H (Synechococcus sp. (strain JA-2-3B'a(2-13)) (Cyanobacteria bacterium Yellowstone B-Prime)).